Here is a 129-residue protein sequence, read N- to C-terminus: Small ribosomal subunit protein uS9 (129 aa).

Belongs to the universal ribosomal protein uS9 family.

In Chlorobium phaeovibrioides (strain DSM 265 / 1930) (Prosthecochloris vibrioformis (strain DSM 265)), this protein is Small ribosomal subunit protein uS9.